Here is a 228-residue protein sequence, read N- to C-terminus: Ribose-5-phosphate isomerase A (228 aa).

Substrate is bound by residues 32 to 35 (TGST), 85 to 88 (DGAD), and 98 to 101 (KGGG). The Proton acceptor role is filled by E107. Position 125 (K125) interacts with substrate.

The protein belongs to the ribose 5-phosphate isomerase family. Homodimer.

It catalyses the reaction aldehydo-D-ribose 5-phosphate = D-ribulose 5-phosphate. Its pathway is carbohydrate degradation; pentose phosphate pathway; D-ribose 5-phosphate from D-ribulose 5-phosphate (non-oxidative stage): step 1/1. Functionally, catalyzes the reversible conversion of ribose-5-phosphate to ribulose 5-phosphate. This Ralstonia pickettii (strain 12J) protein is Ribose-5-phosphate isomerase A.